We begin with the raw amino-acid sequence, 320 residues long: uncharacterized protein (320 aa).

This is an uncharacterized protein from Orgyia pseudotsugata (Douglas-fir tussock moth).